A 150-amino-acid polypeptide reads, in one-letter code: Large ribosomal subunit protein bL9 (150 aa).

The protein belongs to the bacterial ribosomal protein bL9 family.

Binds to the 23S rRNA. In Enterococcus faecalis (strain ATCC 700802 / V583), this protein is Large ribosomal subunit protein bL9.